We begin with the raw amino-acid sequence, 139 residues long: Nucleoside diphosphate kinase (139 aa).

ATP-binding residues include Lys9, Phe57, Arg85, Thr91, Arg102, and Asn112. The active-site Pros-phosphohistidine intermediate is the His115.

Belongs to the NDK family. As to quaternary structure, homotetramer. It depends on Mg(2+) as a cofactor.

It localises to the cytoplasm. It carries out the reaction a 2'-deoxyribonucleoside 5'-diphosphate + ATP = a 2'-deoxyribonucleoside 5'-triphosphate + ADP. It catalyses the reaction a ribonucleoside 5'-diphosphate + ATP = a ribonucleoside 5'-triphosphate + ADP. Major role in the synthesis of nucleoside triphosphates other than ATP. The ATP gamma phosphate is transferred to the NDP beta phosphate via a ping-pong mechanism, using a phosphorylated active-site intermediate. The protein is Nucleoside diphosphate kinase of Desulfosudis oleivorans (strain DSM 6200 / JCM 39069 / Hxd3) (Desulfococcus oleovorans).